A 230-amino-acid chain; its full sequence is Ribosomal RNA large subunit methyltransferase E (230 aa).

Glycine 76, tryptophan 78, aspartate 99, aspartate 115, and aspartate 139 together coordinate S-adenosyl-L-methionine. Lysine 179 serves as the catalytic Proton acceptor.

This sequence belongs to the class I-like SAM-binding methyltransferase superfamily. RNA methyltransferase RlmE family.

Its subcellular location is the cytoplasm. It carries out the reaction uridine(2552) in 23S rRNA + S-adenosyl-L-methionine = 2'-O-methyluridine(2552) in 23S rRNA + S-adenosyl-L-homocysteine + H(+). Specifically methylates the uridine in position 2552 of 23S rRNA at the 2'-O position of the ribose in the fully assembled 50S ribosomal subunit. This Nitrobacter winogradskyi (strain ATCC 25391 / DSM 10237 / CIP 104748 / NCIMB 11846 / Nb-255) protein is Ribosomal RNA large subunit methyltransferase E.